Consider the following 61-residue polypeptide: Large ribosomal subunit protein uL30 (61 aa).

It belongs to the universal ribosomal protein uL30 family. Part of the 50S ribosomal subunit.

This is Large ribosomal subunit protein uL30 from Lactobacillus delbrueckii subsp. bulgaricus (strain ATCC 11842 / DSM 20081 / BCRC 10696 / JCM 1002 / NBRC 13953 / NCIMB 11778 / NCTC 12712 / WDCM 00102 / Lb 14).